A 201-amino-acid chain; its full sequence is Flagellin B1 (201 aa).

The propeptide occupies 1-11; that stretch reads MFEQNDDRDRG.

The protein belongs to the archaeal flagellin family.

It localises to the archaeal flagellum. Functionally, flagellin is the subunit protein which polymerizes to form the filaments of archaeal flagella. This chain is Flagellin B1 (flaB1), found in Natrialba magadii (strain ATCC 43099 / DSM 3394 / CCM 3739 / CIP 104546 / IAM 13178 / JCM 8861 / NBRC 102185 / NCIMB 2190 / MS3) (Natronobacterium magadii).